Reading from the N-terminus, the 412-residue chain is P-selectin glycoprotein ligand 1 (412 aa).

The signal sequence occupies residues 1-17; the sequence is MPLQLLLLLILLGPGNS. A propeptide spanning residues 18-41 is cleaved from the precursor; it reads LQLWDTWADEAEKALGPLLARDRR. Residues 18-320 lie on the Extracellular side of the membrane; sequence LQLWDTWADE…APDHISVKQC (303 aa). Q42 carries the post-translational modification Pyrrolidone carboxylic acid. A sulfotyrosine mark is found at Y46, Y48, and Y51. Residues 56–95 are disordered; it reads ETEPPEMLRNSTDTTPLTGPGTPESTTVEPAARRSTGLDA. The O-linked (GalNAc...) threonine glycan is linked to T57. N-linked (GlcNAc...) asparagine glycosylation is present at N65. Over residues 66–82 the composition is skewed to low complexity; that stretch reads STDTTPLTGPGTPESTT. N-linked (GlcNAc...) asparagine glycosylation occurs at N111. 12 consecutive repeat copies span residues 122–131, 132–141, 142–151, 162–171, 182–191, 192–201, 202–211, 212–221, 222–231, 232–241, 242–251, and 252–261. The 12 X 10 AA tandem repeats stretch occupies residues 122 to 261; the sequence is QTTQPAATEA…QTTPLAAMEA (140 aa). Disordered stretches follow at residues 125–146 and 166–252; these read QPAATEAQTTQPVPTEAQTTPL and LAAT…TEAQ. N302 carries N-linked (GlcNAc...) asparagine glycosylation. A helical membrane pass occupies residues 321 to 341; sequence LLAILILALVATIFFVCTVVL. Topologically, residues 342–412 are cytoplasmic; the sequence is AVRLSRKGHM…DDLTLHSFLP (71 aa). Positions 374-412 are disordered; the sequence is EGPSATANGGLSKAKSPGLTPEPREDREGDDLTLHSFLP. Residues 395–406 show a composition bias toward basic and acidic residues; it reads EPREDREGDDLT. The residue at position 406 (T406) is a Phosphothreonine. Phosphoserine is present on S409.

Homodimer; disulfide-linked. Interaction with P-, E- and L-selectins, through their lectin/EGF domains, is required for promoting recruitment and rolling of leukocytes. These interactions require sialyl Lewis X glycan modification but there is a differing dependence for tyrosine sulfations. Sulfation on Tyr-51 of PSGL1 is most important for high affinity L-selectin/SELL binding while P-selectin/SELP requires sulfation on Tyr-48. E-selectin/SELE binds with much lower affinity and requires the sLe(x) epitope, but apparently not tyrosine sulfation. Dimerization appears not to be required for P-selectin/SELP binding. Interacts with SNX20. Interacts with MSN and SYK; mediates the activation of SYK by SELPLG. Interacts with HAVCR1. As to quaternary structure, (Microbial infection) Interacts with enterovirus 71 capsid proteins. In terms of assembly, (Microbial infection) Interacts with Staphylococcus aureus proteins SSL5 and SSL11; these interactions prevent SELPLG-mediated neutrophil rolling. In terms of processing, displays complex, core-2, sialylated and fucosylated O-linked oligosaccharides, at least some of which appear to contain poly-N-acetyllactosamine with varying degrees of substitution. Mainly disialylated or neutral forms of the core-2 tetrasaccharide, Galbeta1--&gt;4GlcNAcbeta1--&gt;6(Galbeta1--&gt;3)GalNAcOH. The GlcN:GalN ratio is approximately 2:1 and the Man:Fuc ratio 3:5. Contains about 14% fucose with alpha-1,3 linkage present in two forms: One species is a disialylated, monofucosylated glycan, and the other, a monosialylated, trifucosylated glycan with a polylactosamine backbone. The fucosylated forms carry the Lewis antigen and are important for interaction with selectins and for functioning in leukocyte rolling. The modification containing the sialyl Lewis X glycan is on Thr-57. No sulfated O-glycans. Some N-glycosylation. Post-translationally, sulfation, in conjunction with the SLe(x)-containing glycan, is necessary for P- and L-selectin binding. High affinity P-selectin binding has a preferred requirement for the isomer sulfated on both Tyr-48 and Tyr-51, whereas L-selectin binding requires predominantly sulfation on Tyr-51 with sulfation on Tyr-48 playing only a minor role. These sulfations play an important role in L- and P-selectin-mediated neutrophil recruitment, and leukocyte rolling. Expressed on neutrophils, monocytes and most lymphocytes.

It localises to the membrane. An SLe(x)-type proteoglycan, which through high affinity, calcium-dependent interactions with E-, P- and L-selectins, mediates rapid rolling of leukocytes over vascular surfaces during the initial steps in inflammation. Critical for the initial leukocyte capture. Functionally, (Microbial infection) Acts as a receptor for enterovirus 71. This is P-selectin glycoprotein ligand 1 (SELPLG) from Homo sapiens (Human).